Consider the following 396-residue polypeptide: Probable porphobilinogen deaminase (396 aa).

Positions 159–224 are disordered; it reads APALHREHER…DTASSSEFEQ (66 aa). The insert stretch occupies residues 159–245; the sequence is APALHREHER…LQQSAMERDP (87 aa). Positions 162-189 are enriched in basic and acidic residues; it reads LHREHERRTEAEKEAQSRDAREQRRGDY. Over residues 200–215 the composition is skewed to acidic residues; that stretch reads LDTEDGEEGAADDGDD. Residue C328 is modified to S-(dipyrrolylmethanemethyl)cysteine.

It belongs to the HMBS family. The cofactor is dipyrromethane.

The catalysed reaction is 4 porphobilinogen + H2O = hydroxymethylbilane + 4 NH4(+). It participates in porphyrin-containing compound metabolism; protoporphyrin-IX biosynthesis; coproporphyrinogen-III from 5-aminolevulinate: step 2/4. In terms of biological role, tetrapolymerization of the monopyrrole PBG into the hydroxymethylbilane pre-uroporphyrinogen in several discrete steps. The polypeptide is Probable porphobilinogen deaminase (hemC) (Halobacterium salinarum (strain ATCC 700922 / JCM 11081 / NRC-1) (Halobacterium halobium)).